Here is a 413-residue protein sequence, read N- to C-terminus: Histidine--tRNA ligase (413 aa).

The protein belongs to the class-II aminoacyl-tRNA synthetase family. Homodimer.

It is found in the cytoplasm. It carries out the reaction tRNA(His) + L-histidine + ATP = L-histidyl-tRNA(His) + AMP + diphosphate + H(+). The chain is Histidine--tRNA ligase from Ehrlichia chaffeensis (strain ATCC CRL-10679 / Arkansas).